The chain runs to 138 residues: Single-stranded DNA-binding protein 4 (138 aa).

Residues 1–104 (MINNVVLIGR…VVADSFQILE (104 aa)) enclose the SSB domain. The interval 107–138 (DNSTNQASMDDQLPPSFGNSQPMDISDDDLPF) is disordered. The Important for interaction with partner proteins signature appears at 133–138 (DDDLPF).

As to quaternary structure, homotetramer.

Plays an important role in DNA replication, recombination and repair. Binds to ssDNA and to an array of partner proteins to recruit them to their sites of action during DNA metabolism. The sequence is that of Single-stranded DNA-binding protein 4 (ssb4) from Streptococcus agalactiae serotype V (strain ATCC BAA-611 / 2603 V/R).